The following is an 885-amino-acid chain: Leucine--tRNA ligase (885 aa).

Residues 48–58 (PYPSGKLHMGH) carry the 'HIGH' region motif. Positions 639–643 (TMSKS) match the 'KMSKS' region motif. Residue K642 participates in ATP binding.

It belongs to the class-I aminoacyl-tRNA synthetase family.

Its subcellular location is the cytoplasm. The catalysed reaction is tRNA(Leu) + L-leucine + ATP = L-leucyl-tRNA(Leu) + AMP + diphosphate. This Bordetella bronchiseptica (strain ATCC BAA-588 / NCTC 13252 / RB50) (Alcaligenes bronchisepticus) protein is Leucine--tRNA ligase.